Here is a 240-residue protein sequence, read N- to C-terminus: uncharacterized protein (240 aa).

Disordered stretches follow at residues 99 to 121 (EPPT…SPEL) and 136 to 167 (ATVS…KRVH). The segment covering 137–155 (TVSSPTSPRPITTESSRVS) has biased composition (polar residues).

This is an uncharacterized protein from Ictaluridae (bullhead catfishes).